The sequence spans 291 residues: uncharacterized protein (291 aa).

The tract at residues Met-1 to Ser-55 is disordered. A run of 2 helical transmembrane segments spans residues Trp-74–Ala-96 and Tyr-188–Leu-210.

The protein to T.pallidum TP_0733.

Its subcellular location is the cell membrane. This is an uncharacterized protein from Treponema pallidum (strain Nichols).